Consider the following 1123-residue polypeptide: Inner tegument protein (1123 aa).

Disordered regions lie at residues 1–27 and 1047–1123; these read MADR…GPMQ and RPLA…TSYQ. The tract at residues 568-1123 is interaction with large tegument protein; sequence WDITPTTPAT…PTDLPLTSYQ (556 aa).

The protein belongs to the herpesviridae inner tegument protein family. In terms of assembly, interacts (via C-terminus) with the large tegument protein/LTP (via N-terminus). Interacts with host DST. Interacts with host RIGI; this interaction inhibits RIGI activation. Interacts with host CGAS; this interaction inhibits host CGAS activation. Interacts with host TAOK3.

The protein resides in the virion tegument. It localises to the host cytoplasm. The protein localises to the host nucleus. Its subcellular location is the host Golgi apparatus. It is found in the host trans-Golgi network. It catalyses the reaction L-asparaginyl-[protein] + H2O = L-aspartyl-[protein] + NH4(+). It carries out the reaction L-glutaminyl-[protein] + H2O = L-glutamyl-[protein] + NH4(+). Functionally, plays an essential role in cytoplasmic secondary envelopment during viral egress. Interacts with the capsid via the large tegument protein/LTP and participates in its transport to the host trans-Golgi network (TGN) where secondary envelopment occurs. Modulates tegumentation and capsid accumulation at the viral assembly complex. Plays a role in microtubule-based retrograde axonal transport to promote neuroinvasion. Also plays a role in the inhibition of host immune response by acting as a viral deamidase. Deamidates host RIGI on two asparagines which becomes unable to sense viral dsRNA. In turn, its ability to trigger antiviral immune response and restrict viral replication is inhibited. Also deamidates a critical asparagine on host CGAS which abolishes cGAMP synthesis and downstream innate immune activation. In Homo sapiens (Human), this protein is Inner tegument protein (UL37).